We begin with the raw amino-acid sequence, 957 residues long: Retinoblastoma-related protein 1 (957 aa).

The segment at 369–569 (TPVSTAMTTA…EKGSSMYNSL (201 aa)) is domain A. Positions 369-808 (TPVSTAMTTA…NEVFIPTVKP (440 aa)) are pocket. The segment at 570-677 (IVARPTLSAE…PAAGGETCAE (108 aa)) is spacer. The domain B stretch occupies residues 678–808 (TGIGVFLSKI…NEVFIPTVKP (131 aa)). Residues 814 to 854 (GPGTSPNRNNEPKSGGDAASFPESPRLSRFPNLPDMSPKKV) form a disordered region.

It belongs to the retinoblastoma protein (RB) family.

The protein localises to the nucleus. In terms of biological role, regulator of biological processes that recruits a histone deacetylase to control gene transcription. May play a role in the entry into mitosis, negatively regulating the cell proliferation. Formation of stable complexes with geminiviridae replication-associated proteins may create a cellular environment which favors viral DNA replication. The polypeptide is Retinoblastoma-related protein 1 (RBR1) (Triticum aestivum (Wheat)).